The chain runs to 498 residues: ADP,ATP carrier protein 1 (498 aa).

At 1–33 (MSTTKSDNYISELRKVIWPIERYENKKFLPMAF) the chain is on the cytoplasmic side. Residues 34–54 (MMFCILLNYSTLRSIKDGFVV) form a helical membrane-spanning segment. A disulfide bond links C37 and C85. At 55–67 (TDIGAEAISFLKT) the chain is on the extracellular side. Residues 68–88 (YIVLPSAVIAMIVYVKLCDIL) traverse the membrane as a helical segment. Over 89–92 (KQEN) the chain is Cytoplasmic. Residues 93–113 (VFYVITSFFLAYFALFAFVLY) traverse the membrane as a helical segment. Residues 114 to 147 (PNPDLVHPNPEAIESLSLAYPNFKWFIRIVGKWS) are Extracellular-facing. The chain crosses the membrane as a helical span at residues 148–168 (FASFYTMAELWGTLMLSLLFW). Topologically, residues 169 to 184 (QFANQITKTDEAKRFY) are cytoplasmic. The chain crosses the membrane as a helical span at residues 185–205 (SMFGLLANLALPVTSLIIGYF). Over 206 to 218 (LHEKTQIVAEHLK) the chain is Extracellular. A helical transmembrane segment spans residues 219–239 (FTPLFVIMIISSLAVILTYRW). Residues 240-279 (MNKNVLTDPKLYDPALVKGKKAKAKMSLIESFKMIFTSKY) are Cytoplasmic-facing. Residues 280-300 (VGYIALLLIAYGISVNLVEGV) form a helical membrane-spanning segment. The Extracellular segment spans residues 301 to 320 (WKSKLKELHPTKEAYTMYMG). A helical membrane pass occupies residues 321–341 (QFQAYQGWVAIAFMIIGSNIL). The Cytoplasmic portion of the chain corresponds to 342 to 348 (RKVSWLT). A helical membrane pass occupies residues 349–369 (AAMITPLMMLITGIAFFAFIF). Topologically, residues 370–379 (FDSVIAMYLT) are extracellular. A helical transmembrane segment spans residues 380 to 400 (GILASGPLALAVMIGTIQNVL). Topologically, residues 401–438 (SKGVKYSLFDATKNMAYIPLDKDLRVKGQAAVEVIGGR) are cytoplasmic. Position 436–442 (436–442 (GGRFGKS)) interacts with ATP. The chain crosses the membrane as a helical span at residues 439–459 (FGKSGGAIIQSTFFIIFPALG). The Extracellular segment spans residues 460 to 465 (FVEATP). A helical transmembrane segment spans residues 466–486 (YFASIFFVIVILWIYAVKGLN). Residues 487 to 498 (KEYQVLVNNTEK) lie on the Cytoplasmic side of the membrane.

It belongs to the ADP/ATP translocase tlc family.

Its subcellular location is the cell membrane. Its function is as follows. Provides the rickettsial cell with host ATP in exchange for rickettsial ADP. This is an obligate exchange system. This energy acquiring activity is an important component of rickettsial parasitism. This chain is ADP,ATP carrier protein 1 (tlcA), found in Rickettsia bellii (strain RML369-C).